The sequence spans 190 residues: Myophilin (190 aa).

The disordered stretch occupies residues 1 to 23 (MSNVPPPSGLSYQVKKKLEGKRD). The Calponin-homology (CH) domain occupies 24 to 130 (KDQENEALEW…RTLFALGRTC (107 aa)). One copy of the Calponin-like repeat lies at 165 to 189 (VSLQYGSNKGASQAGINMGKQRMIM).

This sequence belongs to the calponin family. Muscle specific.

The polypeptide is Myophilin (Echinococcus granulosus (Hydatid tapeworm)).